A 234-amino-acid chain; its full sequence is Large ribosomal subunit protein uL1 (234 aa).

The protein belongs to the universal ribosomal protein uL1 family. As to quaternary structure, part of the 50S ribosomal subunit.

Binds directly to 23S rRNA. The L1 stalk is quite mobile in the ribosome, and is involved in E site tRNA release. Its function is as follows. Protein L1 is also a translational repressor protein, it controls the translation of the L11 operon by binding to its mRNA. This chain is Large ribosomal subunit protein uL1, found in Helicobacter pylori (strain Shi470).